Consider the following 212-residue polypeptide: Imidazole glycerol phosphate synthase subunit HisH (212 aa).

Positions 3-212 (TVAVIDYGMG…QNFAAWDGRW (210 aa)) constitute a Glutamine amidotransferase type-1 domain. The active-site Nucleophile is Cys-81. Residues His-190 and Glu-192 contribute to the active site.

In terms of assembly, heterodimer of HisH and HisF.

It is found in the cytoplasm. It carries out the reaction 5-[(5-phospho-1-deoxy-D-ribulos-1-ylimino)methylamino]-1-(5-phospho-beta-D-ribosyl)imidazole-4-carboxamide + L-glutamine = D-erythro-1-(imidazol-4-yl)glycerol 3-phosphate + 5-amino-1-(5-phospho-beta-D-ribosyl)imidazole-4-carboxamide + L-glutamate + H(+). It catalyses the reaction L-glutamine + H2O = L-glutamate + NH4(+). The protein operates within amino-acid biosynthesis; L-histidine biosynthesis; L-histidine from 5-phospho-alpha-D-ribose 1-diphosphate: step 5/9. In terms of biological role, IGPS catalyzes the conversion of PRFAR and glutamine to IGP, AICAR and glutamate. The HisH subunit catalyzes the hydrolysis of glutamine to glutamate and ammonia as part of the synthesis of IGP and AICAR. The resulting ammonia molecule is channeled to the active site of HisF. The sequence is that of Imidazole glycerol phosphate synthase subunit HisH from Pseudomonas syringae pv. syringae (strain B728a).